The following is a 64-amino-acid chain: Large ribosomal subunit protein bL35 (64 aa).

It belongs to the bacterial ribosomal protein bL35 family.

The protein is Large ribosomal subunit protein bL35 of Acinetobacter baylyi (strain ATCC 33305 / BD413 / ADP1).